A 315-amino-acid polypeptide reads, in one-letter code: Calumenin (315 aa).

An N-terminal signal peptide occupies residues methionine 1–serine 19. Serine 44 carries the phosphoserine modification. At tyrosine 47 the chain carries Phosphotyrosine. Residue threonine 65 is modified to Phosphothreonine. 6 consecutive EF-hand domains span residues glutamate 68–lysine 103, tyrosine 104–aspartate 139, glutamine 151–aspartate 186, methionine 188–asparagine 223, tryptophan 229–aspartate 264, and histidine 265–serine 300. At serine 69 the chain carries Phosphoserine. Aspartate 81, aspartate 83, aspartate 85, glutamate 92, aspartate 117, asparagine 119, aspartate 121, and glutamate 128 together coordinate Ca(2+). The N-linked (GlcNAc...) asparagine glycan is linked to asparagine 131. Position 164 (aspartate 164) interacts with Ca(2+). At lysine 165 the chain carries N6-acetyllysine. Ca(2+) contacts are provided by aspartate 166, aspartate 168, glutamate 175, aspartate 201, asparagine 203, aspartate 205, glutamate 212, aspartate 242, asparagine 244, aspartate 246, lysine 248, and glutamate 253. Threonine 254 carries the phosphothreonine modification. A phosphoserine mark is found at serine 261 and serine 277. Residues aspartate 278, asparagine 280, aspartate 282, lysine 284, and glutamate 289 each coordinate Ca(2+). Residues histidine 312–phenylalanine 315 carry the Prevents secretion from ER motif.

It belongs to the CREC family. As to quaternary structure, interacts with GGCX.

Its subcellular location is the endoplasmic reticulum membrane. It is found in the golgi apparatus. It localises to the secreted. The protein resides in the melanosome. The protein localises to the sarcoplasmic reticulum lumen. Functionally, involved in regulation of vitamin K-dependent carboxylation of multiple N-terminal glutamate residues. Seems to inhibit gamma-carboxylase GGCX. Binds 7 calcium ions with a low affinity. The chain is Calumenin (CALU) from Bos taurus (Bovine).